The primary structure comprises 261 residues: Indole-3-glycerol phosphate synthase (261 aa).

It belongs to the TrpC family.

It catalyses the reaction 1-(2-carboxyphenylamino)-1-deoxy-D-ribulose 5-phosphate + H(+) = (1S,2R)-1-C-(indol-3-yl)glycerol 3-phosphate + CO2 + H2O. Its pathway is amino-acid biosynthesis; L-tryptophan biosynthesis; L-tryptophan from chorismate: step 4/5. The protein is Indole-3-glycerol phosphate synthase of Paraburkholderia xenovorans (strain LB400).